A 428-amino-acid chain; its full sequence is Adenylosuccinate synthetase (428 aa).

GTP contacts are provided by residues Gly12–Lys18 and Gly40–Thr42. Asp13 acts as the Proton acceptor in catalysis. Mg(2+) is bound by residues Asp13 and Gly40. Residues Asp13–Lys16, Asn38–His41, Thr130, Arg144, Gln225, Thr240, and Arg304 contribute to the IMP site. The Proton donor role is filled by His41. Val300 to Arg306 provides a ligand contact to substrate. GTP is bound by residues Arg306, Lys332 to Asp334, and Gly414 to Gly416.

Belongs to the adenylosuccinate synthetase family. Homodimer. The cofactor is Mg(2+).

Its subcellular location is the cytoplasm. The catalysed reaction is IMP + L-aspartate + GTP = N(6)-(1,2-dicarboxyethyl)-AMP + GDP + phosphate + 2 H(+). It functions in the pathway purine metabolism; AMP biosynthesis via de novo pathway; AMP from IMP: step 1/2. Plays an important role in the de novo pathway of purine nucleotide biosynthesis. Catalyzes the first committed step in the biosynthesis of AMP from IMP. The sequence is that of Adenylosuccinate synthetase from Clostridium beijerinckii (strain ATCC 51743 / NCIMB 8052) (Clostridium acetobutylicum).